The chain runs to 395 residues: Elongation factor Tu (395 aa).

Positions 10–204 (KSHVNVGTLG…AVDEYIPTPE (195 aa)) constitute a tr-type G domain. The tract at residues 19-26 (GHVDHGKT) is G1. 19–26 (GHVDHGKT) contributes to the GTP binding site. T26 lines the Mg(2+) pocket. The tract at residues 60–64 (GITIS) is G2. A G3 region spans residues 81–84 (DCPG). GTP contacts are provided by residues 81-85 (DCPGH) and 136-139 (NKTD). The interval 136–139 (NKTD) is G4. Residues 174–176 (SAL) are G5.

Belongs to the TRAFAC class translation factor GTPase superfamily. Classic translation factor GTPase family. EF-Tu/EF-1A subfamily. In terms of assembly, monomer.

The protein resides in the cytoplasm. It carries out the reaction GTP + H2O = GDP + phosphate + H(+). In terms of biological role, GTP hydrolase that promotes the GTP-dependent binding of aminoacyl-tRNA to the A-site of ribosomes during protein biosynthesis. The protein is Elongation factor Tu of Oceanobacillus iheyensis (strain DSM 14371 / CIP 107618 / JCM 11309 / KCTC 3954 / HTE831).